Reading from the N-terminus, the 252-residue chain is N-acetylglucosaminyl-phosphatidylinositol de-N-acetylase (252 aa).

The helical transmembrane segment at 2–22 threads the bilayer; sequence ELVGFLCVAVAVLTWGFLRVW. The Cytoplasmic segment spans residues 23-252; the sequence is NSAERMRSPE…YMRINSLRFL (230 aa).

Belongs to the PIGL family.

It is found in the endoplasmic reticulum membrane. It catalyses the reaction a 6-(N-acetyl-alpha-D-glucosaminyl)-1-(1,2-diacyl-sn-glycero-3-phospho)-1D-myo-inositol + H2O = a 6-(alpha-D-glucosaminyl)-1-(1,2-diacyl-sn-glycero-3-phospho)-1D-myo-inositol + acetate. It functions in the pathway glycolipid biosynthesis; glycosylphosphatidylinositol-anchor biosynthesis. Functionally, catalyzes the second step of glycosylphosphatidylinositol (GPI) biosynthesis, which is the de-N-acetylation of N-acetylglucosaminyl-phosphatidylinositol. The sequence is that of N-acetylglucosaminyl-phosphatidylinositol de-N-acetylase (Pigl) from Mus musculus (Mouse).